The following is a 399-amino-acid chain: Phosphoglycerate kinase (399 aa).

Residues Asp24 to Asn26, Arg41, His64 to Arg67, Arg123, and Arg160 each bind substrate. ATP contacts are provided by residues Lys210, Gly298, Glu329, and Gly355 to Ser358.

The protein belongs to the phosphoglycerate kinase family. As to quaternary structure, monomer.

It is found in the cytoplasm. It catalyses the reaction (2R)-3-phosphoglycerate + ATP = (2R)-3-phospho-glyceroyl phosphate + ADP. The protein operates within carbohydrate degradation; glycolysis; pyruvate from D-glyceraldehyde 3-phosphate: step 2/5. The polypeptide is Phosphoglycerate kinase (Salinispora arenicola (strain CNS-205)).